A 557-amino-acid polypeptide reads, in one-letter code: DNA replication factor Cdt1 (557 aa).

A PIP-box K+4 motif motif is present at residues Met-1 to Ile-25. The tract at residues Pro-20–Lys-113 is disordered. Thr-28 carries the phosphothreonine; by MAPK8 modification. Ser-30 carries the phosphoserine modification. The short motif at Arg-65 to Leu-67 is the Cyclin-binding motif element. Low complexity predominate over residues Leu-69–Glu-81. Residues Pro-82–Pro-106 show a composition bias toward pro residues. Ser-107 is modified (phosphoserine; by MAPK8). Residues Pro-163 to Tyr-203 form an interaction with GMNN region. Ser-392 bears the Phosphoserine mark. Residues Arg-397 to Leu-427 form a disordered region. Pro residues predominate over residues Ser-407–Ala-422. The interaction with LRWD1 stretch occupies residues Leu-463–Leu-557.

The protein belongs to the Cdt1 family. Interacts with GMNN; the interaction inhibits the binding of the MCM complex to origins of replication. Interacts with MCM6. Interacts with CDC6; are mutually dependent on one another for loading MCM complexes onto chromatin. Interacts with PCNA. Interacts with LRWD1 during G1 phase and during mitosis. Interacts with NDC80 subunit of the NDC80 complex; leading to kinetochore localization. Interacts with KAT7. Interacts with ubiquitin-binding protein FAF1; the interaction is likely to promote CDT1 degradation. In terms of processing, two independent E3 ubiquitin ligase complexes, SCF(SKP2) and the DCX(DTL) complex, mediated CDT1 degradation in S phase. Ubiquitinated by the DCX(DTL) complex, in response to DNA damage, leading to its degradation. Ubiquitination by the DCX(DTL) complex is necessary to ensure proper cell cycle regulation and is PCNA-dependent: interacts with PCNA via its PIP-box, while the presence of the containing the 'K+4' motif in the PIP box, recruit the DCX(DTL) complex, leading to its degradation. Phosphorylation at Thr-28 by CDK2 targets CDT1 for ubiquitynation by SCF(SKP2) E3 ubiquitin ligase and subsequent degradation. The interaction with GMNN protects it against ubiquitination. Deubiquitinated by USP37. Ubiquitinated and degraded by the SCF(FBXO31) complex during the G2 phase to prevent re-replication. Post-translationally, phosphorylation by cyclin A-dependent kinases at Thr-28 targets CDT1 for ubiquitynation by SCF(SKP2) E3 ubiquitin ligase and subsequent degradation. Phosphorylated at Thr-28 by MAPK8/JNK1, which blocks replication licensing in response to stress. Binding to GMNN is not affected by phosphorylation.

It is found in the nucleus. It localises to the chromosome. The protein resides in the centromere. Its subcellular location is the kinetochore. Functionally, required for both DNA replication and mitosis. DNA replication licensing factor, required for pre-replication complex assembly. Cooperates with CDC6 and the origin recognition complex (ORC) during G1 phase of the cell cycle to promote the loading of the mini-chromosome maintenance (MCM) complex onto DNA to generate pre-replication complexes (pre-RC). Required also for mitosis by promoting stable kinetochore-microtubule attachments. Potential oncogene. The sequence is that of DNA replication factor Cdt1 from Mus musculus (Mouse).